A 182-amino-acid polypeptide reads, in one-letter code: MENSRVLSCQYRSSFGSSNARRIRAKSEIPAVVYGQGKDVSHLRIKSSEFNKKFAKFTDNTVLILDDGKLERCVFVKDVAENIASKLIYHIDFYEVDRNVELEKYVPIKLIGASIGVKEGGILTVLKEQVKVRSLPLDLPEFIELDLTPVNKGDSVLLKDLVLPSNVRLAENDENLEVVIIK.

The protein belongs to the bacterial ribosomal protein bL25 family. CTC subfamily. As to quaternary structure, part of the 50S ribosomal subunit; part of the 5S rRNA/L5/L18/L25 subcomplex. Contacts the 5S rRNA. Binds to the 5S rRNA independently of L5 and L18.

In terms of biological role, this is one of the proteins that binds to the 5S RNA in the ribosome where it forms part of the central protuberance. The polypeptide is Large ribosomal subunit protein bL25 (Borreliella burgdorferi (strain ZS7) (Borrelia burgdorferi)).